Reading from the N-terminus, the 150-residue chain is 3-hydroxyacyl-[acyl-carrier-protein] dehydratase FabZ (150 aa).

Residue histidine 54 is part of the active site.

The protein belongs to the thioester dehydratase family. FabZ subfamily.

Its subcellular location is the cytoplasm. It catalyses the reaction a (3R)-hydroxyacyl-[ACP] = a (2E)-enoyl-[ACP] + H2O. Functionally, involved in unsaturated fatty acids biosynthesis. Catalyzes the dehydration of short chain beta-hydroxyacyl-ACPs and long chain saturated and unsaturated beta-hydroxyacyl-ACPs. The protein is 3-hydroxyacyl-[acyl-carrier-protein] dehydratase FabZ of Pseudoalteromonas translucida (strain TAC 125).